Reading from the N-terminus, the 447-residue chain is uncharacterized protein (447 aa).

Residues 39–76 (PQAAPYTRNNGMGECRRGHRQGHRAEVHDNRPADKVGQ) are disordered. A compositionally biased stretch (basic and acidic residues) spans 61–72 (HRAEVHDNRPAD).

This sequence belongs to the 3-oxoacid CoA-transferase subunit A family.

This is an uncharacterized protein from Archaeoglobus fulgidus (strain ATCC 49558 / DSM 4304 / JCM 9628 / NBRC 100126 / VC-16).